The primary structure comprises 580 residues: Amino-acid acetyltransferase, mitochondrial (580 aa).

Residues 403 to 560 (LTMQNLFDDK…KLRHQNGVVD (158 aa)) form the N-acetyltransferase domain.

This sequence belongs to the acetyltransferase family.

It is found in the mitochondrion. The enzyme catalyses L-glutamate + acetyl-CoA = N-acetyl-L-glutamate + CoA + H(+). It functions in the pathway amino-acid biosynthesis; L-arginine biosynthesis; N(2)-acetyl-L-ornithine from L-glutamate: step 1/4. In terms of biological role, N-acetylglutamate synthase involved in arginine biosynthesis. The polypeptide is Amino-acid acetyltransferase, mitochondrial (ARG2) (Candida albicans (strain SC5314 / ATCC MYA-2876) (Yeast)).